The sequence spans 295 residues: Acetylglutamate kinase (295 aa).

Substrate is bound by residues 66-67, R88, and N193; that span reads GG.

This sequence belongs to the acetylglutamate kinase family. ArgB subfamily.

Its subcellular location is the cytoplasm. The catalysed reaction is N-acetyl-L-glutamate + ATP = N-acetyl-L-glutamyl 5-phosphate + ADP. It functions in the pathway amino-acid biosynthesis; L-arginine biosynthesis; N(2)-acetyl-L-ornithine from L-glutamate: step 2/4. Its function is as follows. Catalyzes the ATP-dependent phosphorylation of N-acetyl-L-glutamate. In Rhizobium leguminosarum bv. trifolii (strain WSM2304), this protein is Acetylglutamate kinase.